The primary structure comprises 353 residues: MTAIIERRESANFWSRFCDWITSTENRLYIGWFGVLMIPTLLTATSVFIIAFIAAPPVDIDGIREPVSGSLLYGNNIISGAIIPTSAAIGLHFYPIWEAASVDEWLYNGGPYELIVLHFLLGVACYMGREWELSFRLGMRPWIAVAYSAPVAAATAVFLIYPIGQGSFSDGMPLGISGTFNFMIVFQAEHNILMHPFHMLGVAGVFGGSLFSAMHGSLVTSSLIRETTENQSANAGYKFGQEEETYNIVAAHGYFGRLIFQYASFNNSRSLHFFLAAWPVAGIWFTALGISTMAFNLNGFNFNQSVVDSQGRVINTWADIINRANLGMEVMHERNAHNFPLDLAAVESISIGG.

At Thr2 the chain carries N-acetylthreonine. Phosphothreonine is present on Thr2. 3 helical membrane passes run 29–46 (YIGWFGVLMIPTLLTATS), 118–133 (HFLLGVACYMGREWEL), and 142–156 (WIAVAYSAPVAAATA). Position 118 (His118) interacts with chlorophyll a. Position 126 (Tyr126) interacts with pheophytin a. [CaMn4O5] cluster-binding residues include Asp170 and Glu189. The chain crosses the membrane as a helical span at residues 197-218 (FHMLGVAGVFGGSLFSAMHGSL). Position 198 (His198) interacts with chlorophyll a. Residues His215 and 264-265 (SF) each bind a quinone. Residue His215 coordinates Fe cation. His272 provides a ligand contact to Fe cation. A helical membrane pass occupies residues 274-288 (FLAAWPVAGIWFTAL). [CaMn4O5] cluster-binding residues include His332, Glu333, Asp342, and Ala344. Residues 345-353 (AVESISIGG) constitute a propeptide that is removed on maturation.

Belongs to the reaction center PufL/M/PsbA/D family. PSII is composed of 1 copy each of membrane proteins PsbA, PsbB, PsbC, PsbD, PsbE, PsbF, PsbH, PsbI, PsbJ, PsbK, PsbL, PsbM, PsbT, PsbX, PsbY, PsbZ, Psb30/Ycf12, at least 3 peripheral proteins of the oxygen-evolving complex and a large number of cofactors. It forms dimeric complexes. The cofactor is The D1/D2 heterodimer binds P680, chlorophylls that are the primary electron donor of PSII, and subsequent electron acceptors. It shares a non-heme iron and each subunit binds pheophytin, quinone, additional chlorophylls, carotenoids and lipids. D1 provides most of the ligands for the Mn4-Ca-O5 cluster of the oxygen-evolving complex (OEC). There is also a Cl(-1) ion associated with D1 and D2, which is required for oxygen evolution. The PSII complex binds additional chlorophylls, carotenoids and specific lipids.. Post-translationally, tyr-161 forms a radical intermediate that is referred to as redox-active TyrZ, YZ or Y-Z. In terms of processing, C-terminally processed by CTPA; processing is essential to allow assembly of the oxygen-evolving complex and thus photosynthetic growth.

Its subcellular location is the plastid. The protein localises to the chloroplast thylakoid membrane. The enzyme catalyses 2 a plastoquinone + 4 hnu + 2 H2O = 2 a plastoquinol + O2. Photosystem II (PSII) is a light-driven water:plastoquinone oxidoreductase that uses light energy to abstract electrons from H(2)O, generating O(2) and a proton gradient subsequently used for ATP formation. It consists of a core antenna complex that captures photons, and an electron transfer chain that converts photonic excitation into a charge separation. The D1/D2 (PsbA/PsbD) reaction center heterodimer binds P680, the primary electron donor of PSII as well as several subsequent electron acceptors. The chain is Photosystem II protein D1 from Pinus koraiensis (Korean pine).